The following is a 783-amino-acid chain: Polyribonucleotide nucleotidyltransferase 1, mitochondrial (783 aa).

A mitochondrion-targeting transit peptide spans 1 to 45; it reads MAACRYCCSCLRLRPLSDGPFLLPRRDRALTQLQVRALWSSAGSR. N6-acetyllysine occurs at positions 250, 264, 285, and 289. At Lys-552 the chain carries N6-succinyllysine. The KH domain maps to 605-664; that stretch reads PVVETVQVPLSKRAKFVGPGGYNLKKLQAETGVTISQVDEETFSVFAPTPSAMHEARDFI. One can recognise an S1 motif domain in the interval 679-750; the sequence is GAVYTATITE…ADGRMRLSRK (72 aa). Residues Ser-754 and Ser-782 each carry the phosphoserine modification.

This sequence belongs to the polyribonucleotide nucleotidyltransferase family. In terms of assembly, homotrimer; in free form. Homooligomer. Component of the mitochondrial degradosome (mtEXO) complex which is a heteropentamer containing 2 copies of SUPV3L1 and 3 copies of PNPT1. As part of the mitochondrial degradosome complex, interacts with GRSF1 in an RNA-dependent manner; the interaction enhances the activity of the complex. Interacts with TCL1A; the interaction has no effect on PNPT1 exonuclease activity.

It localises to the cytoplasm. It is found in the mitochondrion matrix. Its subcellular location is the mitochondrion intermembrane space. It carries out the reaction RNA(n+1) + phosphate = RNA(n) + a ribonucleoside 5'-diphosphate. Functionally, RNA-binding protein implicated in numerous RNA metabolic processes. Catalyzes the phosphorolysis of single-stranded polyribonucleotides processively in the 3'-to-5' direction. Mitochondrial intermembrane factor with RNA-processing exoribonulease activity. Component of the mitochondrial degradosome (mtEXO) complex, that degrades 3' overhang double-stranded RNA with a 3'-to-5' directionality in an ATP-dependent manner. Involved in the degradation of non-coding mitochondrial transcripts (MT-ncRNA) and tRNA-like molecules. Required for correct processing and polyadenylation of mitochondrial mRNAs. Plays a role as a cytoplasmic RNA import factor that mediates the translocation of small RNA components, like the 5S RNA, the RNA subunit of ribonuclease P and the mitochondrial RNA-processing (MRP) RNA, into the mitochondrial matrix. Plays a role in mitochondrial morphogenesis and respiration; regulates the expression of the electron transport chain (ETC) components at the mRNA and protein levels. In the cytoplasm, shows a 3'-to-5' exoribonuclease mediating mRNA degradation activity; degrades c-myc mRNA upon treatment with IFNB1/IFN-beta, resulting in a growth arrest in melanoma cells. Regulates the stability of specific mature miRNAs in melanoma cells; specifically and selectively degrades miR-221, preferentially. Also plays a role in RNA cell surveillance by cleaning up oxidized RNAs. Binds to the RNA subunit of ribonuclease P, MRP RNA and miR-221 microRNA. The polypeptide is Polyribonucleotide nucleotidyltransferase 1, mitochondrial (Homo sapiens (Human)).